Here is a 59-residue protein sequence, read N- to C-terminus: Conotoxin reg3.15 (59 aa).

The first 15 residues, 1 to 15 (RVLLTICLLLFPLTA), serve as a signal peptide directing secretion. Residues 16–44 (IPLGGDQPAERMRNVRSAVQDPRFDSVGW) constitute a propeptide that is removed on maturation. 3 disulfides stabilise this stretch: C45–C59, C46–C55, and C51–C58.

Belongs to the conotoxin M superfamily. In terms of tissue distribution, expressed by the venom duct.

It localises to the secreted. This is Conotoxin reg3.15 from Conus regius (Crown cone).